An 887-amino-acid polypeptide reads, in one-letter code: MNEKYDPAAIESAAHAQWVAADAYRVDENARDSQGQLKPKFYACSMLPYPSGKLHMGHVRNYTINDMLTRQLRMKGMNVLMPMGWDAFGLPAENAALKNSVPPEKWTRENIATMKGQMLAMGLAIDWSREVATCDPTYYKWNQWLFLKMLEAGIAERRTQVVNWDPVDQTVLANEQVIDGRGWRSGALVEKREIPGYYLNIVKYADELLGAVANPEDPNYLSGWPERVRLMQENWIGKSEGVRFAFPHQIAGADGELIQGGKLYVFTTRADTIMGVTFCAVAPEHPLAAHAAATNPALAAFIAECAHGGTTEAELATQEKKGLPTGLFVTHPLTGAQVEVWVGNYVLMSYGDGAVMGVPAHDERDFAFAKKYGISIRQVVQAEGQTFSLDGWADWYGDKQRAVCVNSGLLDGLPYKEAVSKVAELVGAQGLGEKKTTWRLRDWGISRQRYWGTPIPIIHCDDCGSVPVPEKDLPVVLPIDCVPDGSGNPLKKRTDFLNVACPCCGKPAQRETDTMDTFVDSSWYFMRYCDARNSEQMVAGGTDYWMPMDQYIGGIEHAILHLLYARFWTKVMRDLGLVKVNEPFTKLLTQGMVLNHIYSRRTDKGGIEYFWPHEVENVFDAGGKVTGAKLKSDGSAVDYGGIGTMSKSKNNGVDPQDLINQYGADTARLFVMFASPPEQTLEWNDAGVEGAHRFLKRVWGFGVKQAELLKGATEVGAELSGDAKALRREVHLVLRQVSYDYERMQYNTVVSGSMKLLNALEAYKHDGSAGSAAVLREGYSVLLRGLYPACPHITHHLWSELGYAAKLGDLLDAPWPEVVEAALVQDEIELVLQVNGKTRGSIKVPAAADKAAIEAAAAASAEVAKFADGKPIRKLIVVPGRLVNVVV.

The short motif at 48 to 58 (PYPSGKLHMGH) is the 'HIGH' region element. The 'KMSKS' region signature appears at 644–648 (TMSKS). An ATP-binding site is contributed by K647.

Belongs to the class-I aminoacyl-tRNA synthetase family.

Its subcellular location is the cytoplasm. The catalysed reaction is tRNA(Leu) + L-leucine + ATP = L-leucyl-tRNA(Leu) + AMP + diphosphate. The polypeptide is Leucine--tRNA ligase (Leptothrix cholodnii (strain ATCC 51168 / LMG 8142 / SP-6) (Leptothrix discophora (strain SP-6))).